The primary structure comprises 480 residues: Ribosomal protein uS12 methylthiotransferase RimO (480 aa).

Positions asparagine 37 to proline 147 constitute an MTTase N-terminal domain. Residues cysteine 46, cysteine 82, cysteine 111, cysteine 179, cysteine 183, and cysteine 186 each coordinate [4Fe-4S] cluster. Positions leucine 165–glutamate 402 constitute a Radical SAM core domain. Residues alanine 405 to aspartate 471 enclose the TRAM domain.

The protein belongs to the methylthiotransferase family. RimO subfamily. The cofactor is [4Fe-4S] cluster.

The protein resides in the cytoplasm. The catalysed reaction is L-aspartate(89)-[ribosomal protein uS12]-hydrogen + (sulfur carrier)-SH + AH2 + 2 S-adenosyl-L-methionine = 3-methylsulfanyl-L-aspartate(89)-[ribosomal protein uS12]-hydrogen + (sulfur carrier)-H + 5'-deoxyadenosine + L-methionine + A + S-adenosyl-L-homocysteine + 2 H(+). Functionally, catalyzes the methylthiolation of an aspartic acid residue of ribosomal protein uS12. The chain is Ribosomal protein uS12 methylthiotransferase RimO from Shewanella sp. (strain ANA-3).